A 264-amino-acid polypeptide reads, in one-letter code: Glutamate racemase (264 aa).

Residues 11–12 (DS) and 43–44 (YG) contribute to the substrate site. Residue Cys-74 is the Proton donor/acceptor of the active site. 75–76 (NT) contributes to the substrate binding site. The Proton donor/acceptor role is filled by Cys-193. Residue 194–195 (TH) participates in substrate binding.

This sequence belongs to the aspartate/glutamate racemases family.

The catalysed reaction is L-glutamate = D-glutamate. It participates in cell wall biogenesis; peptidoglycan biosynthesis. Functionally, provides the (R)-glutamate required for cell wall biosynthesis. This is Glutamate racemase from Bifidobacterium longum subsp. infantis (strain ATCC 15697 / DSM 20088 / JCM 1222 / NCTC 11817 / S12).